A 323-amino-acid chain; its full sequence is Ribose-phosphate pyrophosphokinase 2 (323 aa).

ATP is bound by residues 43–45 (DGE) and 102–103 (RQ). Mg(2+) contacts are provided by H136 and D177. K200 is an active-site residue. Residues R202, D226, and 230–234 (DTAGT) contribute to the D-ribose 5-phosphate site.

The protein belongs to the ribose-phosphate pyrophosphokinase family. Class I subfamily. Homohexamer. Requires Mg(2+) as cofactor.

It is found in the cytoplasm. The enzyme catalyses D-ribose 5-phosphate + ATP = 5-phospho-alpha-D-ribose 1-diphosphate + AMP + H(+). The protein operates within metabolic intermediate biosynthesis; 5-phospho-alpha-D-ribose 1-diphosphate biosynthesis; 5-phospho-alpha-D-ribose 1-diphosphate from D-ribose 5-phosphate (route I): step 1/1. Its function is as follows. Involved in the biosynthesis of the central metabolite phospho-alpha-D-ribosyl-1-pyrophosphate (PRPP) via the transfer of pyrophosphoryl group from ATP to 1-hydroxyl of ribose-5-phosphate (Rib-5-P). This Enterococcus faecalis (strain ATCC 700802 / V583) protein is Ribose-phosphate pyrophosphokinase 2.